A 380-amino-acid chain; its full sequence is Cytochrome b (380 aa).

4 helical membrane passes run 34-54, 78-99, 114-134, and 179-199; these read FGSL…LLAT, WLIR…YLHI, WNTG…GYVL, and FFAL…IHLT. Heme b contacts are provided by His84 and His98. Heme b-binding residues include His183 and His197. An a ubiquinone-binding site is contributed by His202. Transmembrane regions (helical) follow at residues 227–247, 289–309, 321–341, and 348–368; these read LKDI…ALFS, LGGV…PLLH, LSQF…WVGS, and FIII…LLFP.

This sequence belongs to the cytochrome b family. In terms of assembly, the cytochrome bc1 complex contains 11 subunits: 3 respiratory subunits (MT-CYB, CYC1 and UQCRFS1), 2 core proteins (UQCRC1 and UQCRC2) and 6 low-molecular weight proteins (UQCRH/QCR6, UQCRB/QCR7, UQCRQ/QCR8, UQCR10/QCR9, UQCR11/QCR10 and a cleavage product of UQCRFS1). This cytochrome bc1 complex then forms a dimer. The cofactor is heme b.

It is found in the mitochondrion inner membrane. In terms of biological role, component of the ubiquinol-cytochrome c reductase complex (complex III or cytochrome b-c1 complex) that is part of the mitochondrial respiratory chain. The b-c1 complex mediates electron transfer from ubiquinol to cytochrome c. Contributes to the generation of a proton gradient across the mitochondrial membrane that is then used for ATP synthesis. The protein is Cytochrome b (MT-CYB) of Pinguinus impennis (Great auk).